Consider the following 209-residue polypeptide: ATP-dependent Clp protease proteolytic subunit (209 aa).

Ser107 functions as the Nucleophile in the catalytic mechanism. His132 is an active-site residue.

Belongs to the peptidase S14 family. As to quaternary structure, fourteen ClpP subunits assemble into 2 heptameric rings which stack back to back to give a disk-like structure with a central cavity, resembling the structure of eukaryotic proteasomes.

The protein resides in the cytoplasm. The catalysed reaction is Hydrolysis of proteins to small peptides in the presence of ATP and magnesium. alpha-casein is the usual test substrate. In the absence of ATP, only oligopeptides shorter than five residues are hydrolyzed (such as succinyl-Leu-Tyr-|-NHMec, and Leu-Tyr-Leu-|-Tyr-Trp, in which cleavage of the -Tyr-|-Leu- and -Tyr-|-Trp bonds also occurs).. Cleaves peptides in various proteins in a process that requires ATP hydrolysis. Has a chymotrypsin-like activity. Plays a major role in the degradation of misfolded proteins. This is ATP-dependent Clp protease proteolytic subunit from Ruegeria pomeroyi (strain ATCC 700808 / DSM 15171 / DSS-3) (Silicibacter pomeroyi).